The chain runs to 73 residues: Large ribosomal subunit protein bL28 (73 aa).

The protein belongs to the bacterial ribosomal protein bL28 family.

In Anaeromyxobacter sp. (strain Fw109-5), this protein is Large ribosomal subunit protein bL28.